A 395-amino-acid polypeptide reads, in one-letter code: Isoafricanol synthase (395 aa).

Mg(2+) contacts are provided by aspartate 95, asparagine 246, serine 250, and glutamate 254. The span at 346 to 357 (TEAVSGGRERPW) shows a compositional bias: basic and acidic residues. The tract at residues 346 to 395 (TEAVSGGRERPWARLTGAEDLIRAGRGAPPPPGSGPDTRQPMPSEPSQLA) is disordered.

This sequence belongs to the terpene synthase family. Mg(2+) serves as cofactor.

The enzyme catalyses (2E,6E)-farnesyl diphosphate + H2O = (+)-isoafricanol + diphosphate. Functionally, catalyzes the cyclization of farnesyl diphosphate (FPP) to isoafricanol. This chain is Isoafricanol synthase, found in Streptomyces malaysiensis.